Here is a 188-residue protein sequence, read N- to C-terminus: Mitochondrial import receptor subunit TOM20 homolog (188 aa).

The Mitochondrial intermembrane portion of the chain corresponds to 1 to 12 (MSDTILGFNKSN). The chain crosses the membrane as a helical span at residues 13–31 (VVLAAGIAGAAFLGYCIYF). The Cytoplasmic portion of the chain corresponds to 32-188 (DHKRINAPDY…ELIDDTDDLE (157 aa)). Disordered stretches follow at residues 42 to 73 (KDKI…AAPD) and 156 to 188 (DEAE…DDLE). Low complexity predominate over residues 58–67 (MAPRRPAAAG).

The protein belongs to the Tom20 family. Forms part of the preprotein translocase complex of the outer mitochondrial membrane (TOM complex).

Its subcellular location is the mitochondrion outer membrane. In terms of biological role, central component of the receptor complex responsible for the recognition and translocation of cytosolically synthesized mitochondrial preproteins. Together with tomm-22 functions as the transit peptide receptor at the surface of the mitochondrion outer membrane and facilitates the movement of preproteins into the translocation pore. The polypeptide is Mitochondrial import receptor subunit TOM20 homolog (Caenorhabditis elegans).